Reading from the N-terminus, the 335-residue chain is Galactinol synthase 2 (335 aa).

Residue Lys-103 is part of the active site. Residues Asp-119, Asp-121, and His-257 each contribute to the Mn(2+) site.

This sequence belongs to the glycosyltransferase 8 family. Galactosyltransferase subfamily. The cofactor is a divalent metal cation. As to expression, accumulates in mature seeds.

The protein localises to the cytoplasm. The catalysed reaction is myo-inositol + UDP-alpha-D-galactose = alpha-D-galactosyl-(1-&gt;3)-1D-myo-inositol + UDP + H(+). Its function is as follows. Galactinol synthase involved in the biosynthesis of raffinose family oligosaccharides (RFOs) that function as osmoprotectants. Promotes stress tolerance of factors such as drought, chilling, salinity and methylviologen (MV), a superoxide radical generating drug, by mediating an increase in levels of the endogenous osmoprotective compounds, galactinol and raffinose. The sequence is that of Galactinol synthase 2 (GOLS2) from Arabidopsis thaliana (Mouse-ear cress).